We begin with the raw amino-acid sequence, 202 residues long: Recoverin (202 aa).

Gly-2 is lipidated: N-myristoyl glycine. Cys-39 is subject to Cysteine sulfenic acid (-SOH). EF-hand domains are found at residues 41 to 59, 61 to 96, 97 to 132, and 147 to 182; these read SGRITKQEFQSIYSKFFPE, DPKAYAQHVFRSFDANSDGTLDFKEYVIALHMTSAG, KTNQKLEWAFSLYDVDGNGAISKSEVLEIVMAIFKM, and TPEKRAEKIWGFFGKKDDDKLTEEEFIEGTLANKEI. Residues Asp-74, Asn-76, Asp-78, Thr-80, Glu-85, Asp-110, Asp-112, Asn-114, and Glu-121 each coordinate Ca(2+). Positions 189-192 are interaction with GRK1; the sequence is EPRK.

This sequence belongs to the recoverin family. As to quaternary structure, homodimer; disulfide-linked. Homodimerization is caused by prolonged intense illumination. May form a complex composed of RHO, GRK1 and RCVRN in a Ca(2+)-dependent manner; RCVRN prevents the interaction between GRK1 and RHO. Interacts (via C-terminus) with GRK1 (via N-terminus); the interaction is Ca(2+)-dependent. In terms of processing, the N-terminal glycine is linked to one of four different types of acyl groups. The most abundant is myristoleate (14:1), but 14:0, 14:2, and 12:0 acyl residues are also present. The Ca(2+) induced exposure of the myristoyl group, known as the calcium-myristoyl switch, promotes RCVRN binding to the photoreceptor cell membranes only when intracellular Ca(2+) concentration is high. Post-translationally, oxidation on Cys-39 occurs in response to prolonged intense illumination and results in the formation of disulfide homodimers, and to a lesser extent disulfide-linked heterodimers.

Its subcellular location is the photoreceptor inner segment. It localises to the cell projection. The protein resides in the cilium. It is found in the photoreceptor outer segment. The protein localises to the photoreceptor outer segment membrane. Its subcellular location is the perikaryon. Functionally, acts as a calcium sensor and regulates phototransduction of cone and rod photoreceptor cells. Modulates light sensitivity of cone photoreceptor in dark and dim conditions. In response to high Ca(2+) levels induced by low light levels, prolongs RHO/rhodopsin activation in rod photoreceptor cells by binding to and inhibiting GRK1-mediated phosphorylation of RHO/rhodopsin. Plays a role in scotopic vision/enhances vision in dim light by enhancing signal transfer between rod photoreceptors and rod bipolar cells. Improves rod photoreceptor sensitivity in dim light and mediates response of rod photoreceptors to facilitate detection of change and motion in bright light. This is Recoverin (RCVRN) from Canis lupus familiaris (Dog).